We begin with the raw amino-acid sequence, 497 residues long: Serine/threonine-protein phosphatase 2A 56 kDa regulatory subunit beta isoform (497 aa).

Over residues 1-19 (METKLPPASTPTSPSSPGL) the composition is skewed to low complexity. Disordered stretches follow at residues 1-55 (METK…YQSN) and 473-497 (QGTQ…GGQS). Residues Ser32, Ser35, Ser44, Ser46, Ser47, and Ser48 each carry the phosphoserine modification. Residues 34–45 (RSLRRARPRRSH) show a composition bias toward basic residues.

It belongs to the phosphatase 2A regulatory subunit B56 family. Component of the serine/threonine-protein phosphatase 2A complex (PP2A). This complex consists of a common heterodimeric core enzyme, composed of a 36 kDa catalytic subunit (subunit C) and a 65 kDa constant scaffold subunit (PR65 or subunit A), that associates with a variety of regulatory subunits. Proteins that associate with the core dimer include three families of regulatory subunits B (the R2/B/PR55/B55, R3/B''/PR72/PR130/PR59 and R5/B'/B56 families), the 48 kDa variable regulatory subunit, viral proteins, and cell signaling molecules. Interacts with SGO1. Interacts with AKT1. In terms of processing, ubiquitinated by CUL3-KLHL15 complex; this modification leads to proteasomal degradation. Widely expressed at the mRNA level, with highest levels in cerebellum and lung.

It is found in the cytoplasm. Its function is as follows. As the regulatory component of the serine/threonine-protein phosphatase 2A (PP2A) holoenzyme, modulates substrate specificity, subcellular localization, and responsiveness to phosphorylation. The phosphorylated form mediates the interaction between PP2A and AKT1, leading to AKT1 dephosphorylation. The polypeptide is Serine/threonine-protein phosphatase 2A 56 kDa regulatory subunit beta isoform (Ppp2r5b) (Rattus norvegicus (Rat)).